A 511-amino-acid chain; its full sequence is Protein HESO1 (511 aa).

Residues A378 to Q511 form a disordered region. A compositionally biased stretch (low complexity) spans Q381 to S392. The segment covering L404–G465 has biased composition (polar residues).

This sequence belongs to the DNA polymerase type-B-like family.

It is found in the cytoplasm. The protein resides in the P-body. It localises to the nucleus. The enzyme catalyses RNA(n) + UTP = RNA(n)-3'-uridine ribonucleotide + diphosphate. Completely inhibited by 2'-O-methylation on the substrate RNA. Functionally, uridylates small RNAs to trigger their degradation. Catalyzes the uridylation of 5' fragments produced by AGO1-mediated cleavage of miRNA target RNAs. Acts synergistically with URT1 in unmethylated miRNA uridylation, leading to their degradation. URT1 and HESO1 prefer substrates with different 3' end nucleotides and act cooperatively to tail different forms of the same miRNAs. URT1 and HESO1 act sequentially, with URT1 mono-uridylating the miRNAs followed by their further uridylation by HESO1. URT1 and HESO1 are involved in the uridylation and clearance of RISC-generated 5' mRNA fragments. Able to act on AGO1-bound miRNAs and the uridylated species stay associated with AGO1. This Arabidopsis thaliana (Mouse-ear cress) protein is Protein HESO1.